Consider the following 668-residue polypeptide: UvrABC system protein B (668 aa).

The Helicase ATP-binding domain maps to 27–413 (AGVQAGHRFQ…STQVVEQIIR (387 aa)). 40–47 (GATGTGKT) is a binding site for ATP. Residues 93–116 (YYDYYQPEAYIPVTDTYIEKSASI) carry the Beta-hairpin motif. A Helicase C-terminal domain is found at 430 to 596 (QVDDLYGEIR…PIVKKTSNAI (167 aa)). Residues 628-663 (PPLIQDLEAKMKAAAQELAFEEAARYRDQIKRLRDR) form the UVR domain.

The protein belongs to the UvrB family. Forms a heterotetramer with UvrA during the search for lesions. Interacts with UvrC in an incision complex.

The protein resides in the cytoplasm. In terms of biological role, the UvrABC repair system catalyzes the recognition and processing of DNA lesions. A damage recognition complex composed of 2 UvrA and 2 UvrB subunits scans DNA for abnormalities. Upon binding of the UvrA(2)B(2) complex to a putative damaged site, the DNA wraps around one UvrB monomer. DNA wrap is dependent on ATP binding by UvrB and probably causes local melting of the DNA helix, facilitating insertion of UvrB beta-hairpin between the DNA strands. Then UvrB probes one DNA strand for the presence of a lesion. If a lesion is found the UvrA subunits dissociate and the UvrB-DNA preincision complex is formed. This complex is subsequently bound by UvrC and the second UvrB is released. If no lesion is found, the DNA wraps around the other UvrB subunit that will check the other stand for damage. This is UvrABC system protein B from Thermosynechococcus vestitus (strain NIES-2133 / IAM M-273 / BP-1).